Reading from the N-terminus, the 203-residue chain is ATP-dependent Clp protease proteolytic subunit 2 (203 aa).

Residue Ser100 is the Nucleophile of the active site. His125 is an active-site residue.

This sequence belongs to the peptidase S14 family. Fourteen ClpP subunits assemble into 2 heptameric rings which stack back to back to give a disk-like structure with a central cavity, resembling the structure of eukaryotic proteasomes.

It is found in the cytoplasm. It carries out the reaction Hydrolysis of proteins to small peptides in the presence of ATP and magnesium. alpha-casein is the usual test substrate. In the absence of ATP, only oligopeptides shorter than five residues are hydrolyzed (such as succinyl-Leu-Tyr-|-NHMec, and Leu-Tyr-Leu-|-Tyr-Trp, in which cleavage of the -Tyr-|-Leu- and -Tyr-|-Trp bonds also occurs).. Its function is as follows. Cleaves peptides in various proteins in a process that requires ATP hydrolysis. Has a chymotrypsin-like activity. Plays a major role in the degradation of misfolded proteins. This Nocardia farcinica (strain IFM 10152) protein is ATP-dependent Clp protease proteolytic subunit 2.